Reading from the N-terminus, the 123-residue chain is Large ribosomal subunit protein uL14 (123 aa).

It belongs to the universal ribosomal protein uL14 family. Part of the 50S ribosomal subunit. Forms a cluster with proteins L3 and L19. In the 70S ribosome, L14 and L19 interact and together make contacts with the 16S rRNA in bridges B5 and B8.

Its function is as follows. Binds to 23S rRNA. Forms part of two intersubunit bridges in the 70S ribosome. In Escherichia coli O139:H28 (strain E24377A / ETEC), this protein is Large ribosomal subunit protein uL14.